The following is a 372-amino-acid chain: N-methyl-L-tryptophan oxidase (372 aa).

FAD is bound at residue 4–34; the sequence is DLIIIGSGSVGAAAGYYATRAGLNVLMTDAH. S-8alpha-FAD cysteine is present on Cys-308.

The protein belongs to the MSOX/MTOX family. MTOX subfamily. Monomer. It depends on FAD as a cofactor.

It carries out the reaction N(alpha)-methyl-L-tryptophan + O2 + H2O = L-tryptophan + formaldehyde + H2O2. Its function is as follows. Catalyzes the oxidative demethylation of N-methyl-L-tryptophan. The polypeptide is N-methyl-L-tryptophan oxidase (Escherichia coli O157:H7).